Consider the following 141-residue polypeptide: ATP synthase epsilon chain (141 aa).

The protein belongs to the ATPase epsilon chain family. In terms of assembly, F-type ATPases have 2 components, CF(1) - the catalytic core - and CF(0) - the membrane proton channel. CF(1) has five subunits: alpha(3), beta(3), gamma(1), delta(1), epsilon(1). CF(0) has three main subunits: a, b and c.

The protein localises to the cell inner membrane. In terms of biological role, produces ATP from ADP in the presence of a proton gradient across the membrane. This is ATP synthase epsilon chain from Paraburkholderia phymatum (strain DSM 17167 / CIP 108236 / LMG 21445 / STM815) (Burkholderia phymatum).